The chain runs to 1009 residues: MLFSGGQYSPVGRPEEVLLIYKIFLVIICFHVILVTSLKENGNSSLLSPSAESSLVSLIPYSNGTPDAASEVLSTLNKTEKSKITIVKTFNASGVKSQRNICNLSSLCNDSVFFRGEIVFQHDEDHNVTQNQDTANGTFAGVLSLSELKRSELNKTLQTLSETYFIVCATAEAQSTVNCTFTVKLNETMNVCAMMVTFQTVQIRPMEQCCCSPRTPCPSSPEELEKLQCELQDPIVCLADQPHGPPLSSSSKPVVPQATIISHVASDFSLAEPLDHALMTPSTPSLTQESNLPSPQPTIPLASSPATDLPVQSVVVSSLPQTDLSHTLSPVQSSIPSPTTPAPSVPTELVTISTPPGETVVNTSTVSDLEAQVSQMEKALSLGSLEPNLAGEMVNRVSKLLHSPPALLAPLAQRLLKVVDAIGLQLNFSSTTISLTSPSLALAVIRVNASNFNTTTFAAQDPTNLQVSLETPPPENSIGAITLPSSLMNNLPANDVELASRIQFNFFETPALFQDPSLENLTLISYVISSSVTNMTIKNLTRNVTVALKHINPSPDDLTVKCVFWDLGRNGGKGGWSSDGCSVKDKRMNETICTCSHLTSFGILLDLSRTSLPPSQMMALTFITYIGCGLSSIFLSVTLVTYIAFEKIRRDYPSKILIQLCAALLLLNLIFLLDSWIALYNTRGFCIAVAVFLHYFLLVSFTWMGLEAFHMYLALVKVFNTYIRKYILKFCIVGWGIPAVVVSIVLTISPDNYGIGSYGKFPNGTPDDFCWINSNVVFYITVVGYFCVIFLLNVSMFIVVLVQLCRIKKKKQLGAQRKTSIQDLRSIAGLTFLLGITWGFAFFAWGPVNVTFMYLFAIFNTLQGFFIFIFYCAAKENVRKQWRRYLCCGKLRLAENSDWSKTATNGLKKQTVNQGVSSSSNSLQSSCNSTNSTTLLVNSDCSVHASGNGNASTERNGVSFSVQNGDVCLHDLTGKQHMFSDKEDSCNGKSRIALRRTSKRGSLHFIEQM.

An N-terminal signal peptide occupies residues 1–37 (MLFSGGQYSPVGRPEEVLLIYKIFLVIICFHVILVTS). Topologically, residues 38-617 (LKENGNSSLL…SRTSLPPSQM (580 aa)) are extracellular. Residues Asn-43, Asn-77, Asn-91, Asn-103, Asn-109, Asn-127, Asn-136, Asn-154, Asn-178, and Asn-186 are each glycosylated (N-linked (GlcNAc...) asparagine). Disordered stretches follow at residues 279 to 305 (MTPS…ASSP) and 325 to 346 (SHTL…PSVP). The segment covering 280 to 293 (TPSTPSLTQESNLP) has biased composition (polar residues). Asn-362, Asn-427, Asn-448, Asn-453, Asn-520, Asn-534, Asn-539, Asn-543, and Asn-589 each carry an N-linked (GlcNAc...) asparagine glycan. The region spanning 453–611 (NTTTFAAQDP…GILLDLSRTS (159 aa)) is the GAIN-B domain. Intrachain disulfides connect Cys-562–Cys-593 and Cys-581–Cys-595. The GPS stretch occupies residues 562-611 (CVFWDLGRNGGKGGWSSDGCSVKDKRMNETICTCSHLTSFGILLDLSRTS). A stachel region spans residues 600–611 (SFGILLDLSRTS). Residues 618–640 (MALTFITYIGCGLSSIFLSVTLV) form a helical membrane-spanning segment. At 641 to 655 (TYIAFEKIRRDYPSK) the chain is on the cytoplasmic side. Residues 656–679 (ILIQLCAALLLLNLIFLLDSWIAL) form a helical membrane-spanning segment. At 680 to 683 (YNTR) the chain is on the extracellular side. Residues 684 to 709 (GFCIAVAVFLHYFLLVSFTWMGLEAF) traverse the membrane as a helical segment. A disulfide bridge connects residues Cys-686 and Cys-770. The Cytoplasmic segment spans residues 710–728 (HMYLALVKVFNTYIRKYIL). Residues 729-751 (KFCIVGWGIPAVVVSIVLTISPD) traverse the membrane as a helical segment. Over 752 to 776 (NYGIGSYGKFPNGTPDDFCWINSNV) the chain is Extracellular. The helical transmembrane segment at 777–802 (VFYITVVGYFCVIFLLNVSMFIVVLV) threads the bilayer. At 803 to 823 (QLCRIKKKKQLGAQRKTSIQD) the chain is on the cytoplasmic side. Residues 824–845 (LRSIAGLTFLLGITWGFAFFAW) form a helical membrane-spanning segment. Residues 846–850 (GPVNV) lie on the Extracellular side of the membrane. N-linked (GlcNAc...) asparagine glycosylation occurs at Asn-849. Residues 851–872 (TFMYLFAIFNTLQGFFIFIFYC) form a helical membrane-spanning segment. Residue Asn-860 participates in 3beta-hydroxyandrost-5-en-17-one binding. Residues 873 to 1009 (AAKENVRKQW…RGSLHFIEQM (137 aa)) lie on the Cytoplasmic side of the membrane. Residue Ser-1002 is modified to Phosphoserine.

This sequence belongs to the G-protein coupled receptor 2 family. Adhesion G-protein coupled receptor (ADGR) subfamily. Heterodimer of 2 chains generated by proteolytic processing; the large extracellular N-terminal fragment and the membrane-bound C-terminal fragment predominantly remain associated and non-covalently linked. Interacts with CFTR. Proteolytically cleaved into 2 subunits, an extracellular subunit and a seven-transmembrane subunit. In terms of processing, highly glycosylated. In terms of tissue distribution, epididymis-specific expression (at protein level). Associated with apical membranes of efferent ductule and proximal epididymal duct epithelia. Mainly expressed in the nonciliated principal cells of the proximal excurrent ducts.

The protein localises to the apical cell membrane. Forms a heterodimer of 2 chains generated by proteolytic processing that remain associated through non-covalent interactions mediated by the GAIN-B domain. In the inactivated receptor, the Stachel sequence (also named stalk) is embedded in the GAIN-B domain, where it adopts a beta-strand conformation. On activation, the Stachel moves into the 7 transmembrane region and adopts a twisted hook-shaped configuration that forms contacts within the receptor, leading to coupling of a G-alpha protein, which activates signaling. The cleaved GAIN-B and N-terminal domains can then dissociate from the rest of the receptor. Deoxycorticosterone (DOC) acts as an antagonist of ADGRG2. In terms of biological role, adhesion G-protein coupled receptor (aGPCR) for steroid hormones, such as dehydroepiandrosterone (DHEA; also named 3beta-hydroxyandrost-5-en-17-one) and androstenedione. Involved in a signal transduction pathway controlling epididymal function and male fertility. Ligand binding causes a conformation change that triggers signaling via guanine nucleotide-binding proteins (G proteins) and modulates the activity of downstream effectors, such as adenylate cyclase. ADGRG2 is coupled to G(s) G proteins and mediates activation of adenylate cyclase activity. Also able to couple with G(q) G proteins in vitro. May regulate fluid exchange within epididymis. This is Adhesion G-protein coupled receptor G2 from Mus musculus (Mouse).